Here is a 108-residue protein sequence, read N- to C-terminus: Large ribosomal subunit protein bL31B (108 aa).

The segment at 85–108 (PKPETSVEEVLPKGKKKAPAKKKK) is disordered. The span at 97-108 (KGKKKAPAKKKK) shows a compositional bias: basic residues.

Belongs to the bacterial ribosomal protein bL31 family. Type B subfamily. As to quaternary structure, part of the 50S ribosomal subunit.

The protein is Large ribosomal subunit protein bL31B of Chlamydia muridarum (strain MoPn / Nigg).